The primary structure comprises 370 residues: Keratin-associated protein 10-7 (370 aa).

A 30 X 5 AA repeats of C-C-X(3) region spans residues Asp-36 to Thr-363. Tandem repeats lie at residues Cys-41–Pro-45, Cys-46–Ala-50, Cys-67–Thr-71, Cys-89–Ser-93, Cys-99–Ser-103, Cys-109–Val-113, Cys-114–Val-118, Cys-119–Val-123, Cys-135–Ser-139, Cys-145–Ser-149, Cys-155–Ile-159, Cys-160–Val-164, Cys-172–Ser-176, Cys-186–Val-190, Cys-208–Ser-212, Cys-218–Ser-222, Cys-228–Val-232, Cys-233–Val-237, Cys-238–Thr-242, Cys-250–Ala-254, Cys-255–Ser-259, Cys-265–Val-269, Cys-270–Val-274, Cys-275–Val-279, Cys-287–Ser-291, Cys-297–Ser-301, Cys-302–Ser-306, Cys-321–Val-325, Cys-339–Ala-343, and Cys-359–Thr-363.

The protein belongs to the KRTAP type 10 family. Interacts with hair keratins. As to expression, restricted to a narrow region of the hair fiber cuticle, lying approximately 20 cell layers above the apex of the dermal papilla of the hair root; not detected in any other tissues.

Its function is as follows. In the hair cortex, hair keratin intermediate filaments are embedded in an interfilamentous matrix, consisting of hair keratin-associated proteins (KRTAP), which are essential for the formation of a rigid and resistant hair shaft through their extensive disulfide bond cross-linking with abundant cysteine residues of hair keratins. The matrix proteins include the high-sulfur and high-glycine-tyrosine keratins. The polypeptide is Keratin-associated protein 10-7 (KRTAP10-7) (Homo sapiens (Human)).